The sequence spans 245 residues: Cypemycin N-terminal methyltransferase (245 aa).

The protein belongs to the methyltransferase superfamily.

It carries out the reaction N-terminal L-alanyl-[cypemycin] + 2 S-adenosyl-L-methionine = N-terminal N,N-dimethyl-L-alanyl-[cypemycin] + 2 S-adenosyl-L-homocysteine + 3 H(+). Functionally, involved in the biosynthesis of the lanaridin cypemycin. The enzyme can methylate a variety of oligopeptides, cyclic peptides and the epsilon-amino group of lysine. The protein is Cypemycin N-terminal methyltransferase of Streptomyces sp.